Here is a 461-residue protein sequence, read N- to C-terminus: Aldehyde dehydrogenase LUC3 (461 aa).

215–220 (GSTATG) serves as a coordination point for NAD(+). Catalysis depends on residues glutamate 237 and cysteine 271.

This sequence belongs to the aldehyde dehydrogenase family.

It carries out the reaction an aldehyde + NAD(+) + H2O = a carboxylate + NADH + 2 H(+). It functions in the pathway mycotoxin biosynthesis. In terms of biological role, aldehyde dehydrogenase; part of the gene cluster that mediates the biosynthesis of the mycotoxin lucilactaene and the lucilactaene-related compound NG-391 that act as cell cycle inhibitors with potent growth inhibitory activity against malarial parasites, moderate growth inhibitory activity against cancer cells, and no activity against bacteria and fungi. LUC3 is important for lucilactaene biosynthesis and performs the oxidation of the C-20 alcoholic analog prelucilactaene G into a carboxylic derivative that has still to be identified. The pathway begins with the hybrid PKS-NRPS synthetase LUC5 which is responsible for the condensation of one acetyl-coenzyme A (CoA) unit with six malonyl-CoA units and the amide linkage of the arising heptaketide and homoserine, subsequently releasing the first intermediate prelucilactaene B. Both the cytochrome P450 monooxygenase LUC2 and the hydrolase LUC6 function in parallel in modification of prelucilactaene B. LUC6 may catalyze the 2-pyrrolidone ring formation to form prelucilactaene C from prelucilactaene B, followed by C-15 hydroxylation by the same enzyme to give prelucilactaene D, which is then converted to prelucilactaene E by epoxidation, and finally to prelucilactaene F by cyclization. Prelucilactane D, prelucilactaene E, and prelucilactaene F can be converted to dihydrolucilactaene, NG391, and lucilactaene, respectively, via C-20 methyl group hydroxylation by the cytochrome P450 monooxygenase LUC2. However, LUC2, unlike FUS8 in fusarin C biosynthesis, is not enough for the full oxidation of the C-20 methyl group into carboxylic acid, which is a prerequisite for the final methylation step. The aldehyde dehydrogenase LUC3 is involved in the biosynthesis by further oxidation of the C-20 alcoholic analog prelucilactaene G into a carboxylic derivative. This unidentified carboxylic derivative may be converted to demethyllucilactaene. As the last step, the methyltransferase LUC1 methylates the hydroxyl group at C-21 of demethyllucilactaene to generate lucilactaene. This Fusarium sp protein is Aldehyde dehydrogenase LUC3.